The following is a 143-amino-acid chain: Transcriptional regulator MraZ (143 aa).

SpoVT-AbrB domains lie at 5–47 and 76–119; these read EYQH…PQEE and ASEC…SKSE.

The protein belongs to the MraZ family. Forms oligomers.

Its subcellular location is the cytoplasm. It localises to the nucleoid. The chain is Transcriptional regulator MraZ from Listeria welshimeri serovar 6b (strain ATCC 35897 / DSM 20650 / CCUG 15529 / CIP 8149 / NCTC 11857 / SLCC 5334 / V8).